The primary structure comprises 556 residues: Potassium-transporting ATPase potassium-binding subunit (556 aa).

A run of 10 helical transmembrane segments spans residues 6 to 26 (AGIA…VPLG), 65 to 85 (SVLA…LVQG), 133 to 153 (GLAV…IALV), 176 to 196 (LRIL…GGAI), 249 to 269 (PTPW…FSLP), 283 to 303 (VAIA…TMLL), 378 to 398 (GLYG…LMVG), 415 to 435 (LAAS…AIAM), 483 to 503 (ALGL…LALA), and 526 to 546 (FVGM…LPIL).

Belongs to the KdpA family. As to quaternary structure, the system is composed of three essential subunits: KdpA, KdpB and KdpC.

The protein localises to the cell membrane. In terms of biological role, part of the high-affinity ATP-driven potassium transport (or Kdp) system, which catalyzes the hydrolysis of ATP coupled with the electrogenic transport of potassium into the cytoplasm. This subunit binds the extracellular potassium ions and delivers the ions to the membrane domain of KdpB through an intramembrane tunnel. The protein is Potassium-transporting ATPase potassium-binding subunit of Mycolicibacterium smegmatis (strain ATCC 700084 / mc(2)155) (Mycobacterium smegmatis).